Consider the following 637-residue polypeptide: Chaperone protein HtpG (637 aa).

The a; substrate-binding stretch occupies residues 1–345 (MSQQETHGFQ…SNDLPLNVSR (345 aa)). Positions 346-562 (EILQDNQVTT…EGEMSTQMIK (217 aa)) are b. Residues 563–637 (LMQAAGQAVP…MNQMLLANAK (75 aa)) are c.

Belongs to the heat shock protein 90 family. As to quaternary structure, homodimer.

Its subcellular location is the cytoplasm. Functionally, molecular chaperone. Has ATPase activity. This chain is Chaperone protein HtpG, found in Shewanella denitrificans (strain OS217 / ATCC BAA-1090 / DSM 15013).